We begin with the raw amino-acid sequence, 228 residues long: Secreted LysM effector ECP6 (228 aa).

The N-terminal stretch at 1–18 (MQSMILFAAALMGAAVNG) is a signal peptide. Disulfide bonds link C36–C90, C64–C98, C109–C163, and C168–C220. A LysM 1 domain is found at 42–86 (IKYTVVKGDTLTSIAKKFKSGICNIVSVNKLANPNLIELGATLII). 4 residues coordinate chitin: T51, T53, N76, and I78. Residues N89, N95, N127, and N133 are each glycosylated (N-linked (GlcNAc...) asparagine). 2 LysM domains span residues 115–160 (GSYT…IITV) and 172–216 (GTYN…QIIL). Positions 179, 181, 183, 205, 206, and 208 each coordinate chitin. N-linked (GlcNAc...) asparagine glycosylation occurs at N222.

Belongs to the secreted LysM effector family. As to quaternary structure, forms homodimers.

It localises to the secreted. Its function is as follows. Secreted effector that enables the plant pathogenic fungus to manipulate host defenses for successful infection. Binds chitine, but not to any other glycan, including the N-linked glycan chitobiose. Outcompetes host immune receptor for chitin binding through intrachain LysM dimerization. During infection, sequesters chitin oligosaccharides that are released from the cell walls of invading hyphae to prevent elicitation of host immunity. The polypeptide is Secreted LysM effector ECP6 (Passalora fulva (Tomato leaf mold)).